A 1159-amino-acid polypeptide reads, in one-letter code: MTLSKTPPRIERFGDITEVIPLPNLTEVQVNSFKAFLQDDKAPDQREDVGLQSAFREVFPIDESEKGRSTGMVLDFIEYRLGEPEYSPEECREKDLTYEAPLYVKLELIHKDTGVIKGFKPDSPPESWVFLGNLPLMTFDGSFIINGADRVVISQIHRSPGVYFTSSYKGIKKQYTAAIIPMPKRGPWIELEFAGDVLEMKVNKRKFPVSLLLRVLGMDDASIRALFTEFTPEVEPGEDKSAGMGADEALLRLFTVLRPGDPPKRDKAIQYLFGLLADPRRYDLGEPGRFKMNTKLGVQRQERTLLKFEDGKFSDAGLVDTIRYLMALQQGLETVPMVDEDGVVTDVPVAEDDIDHLGNRRVRTVGELLADQLRVGMGRMARGVRERMLLGNPDAATPTKLVNNRPIVAAMREFFGRSQLSQFKDQTNPLSDLRHKRRISALGPGGLTRERAGFDVRDVHRTHYGRICPIETPEGANIGLISSLSSYAKVNDLGFIMAPYRKVEDGKVTNQVEYMTADIEDRYTIAQANSPLNEDNTFADERVLARRKGDPLLYTPDEVDYMDVSPKQIVSINTSLIPFLEHDDANRALMGSNMQSQAVPLVRADSPAVGTGVERRVVTDSGTSVVSDVNGRVSYVDARAIQVTLSEDHRELNMNAGNVRTFELIRFTRSNQGTNLDQHPIVSVGDEVKVGQVIADGPASERGRLALGQNITIAIMPFDGFNFEDAICINEDLVRQDFYTSVHIEKDEIEARDTKLGPEKITRDIPGLSEAALRDLDEDGIVRVGAEVKPGDILVGKTSFKGESEPTPEERLLRSIFGEKAREVKDTSLRVQSGQGGIVVKTVRFRRGDEGVDLKPGVREMVRVYVAQKRQLQVGDKVANRHGNKGVVSKIVRPEDMPYLEDGTPVDIVFNPLGVPSRMNLGQILETHLGEVARLTGQKFETPVFDSVTEATIKEMLEVAAAERLQARKDDGFELDKREQEVLDRAGKLGVIDAPGDDYEKGQMQLARTGKSILYDGRTGEPISGPVVVGIMYVMKLYHMVEDKLHARSTGPYSLITQQPLGGKAQFGGQRFGEMEVWALEAYGAAHVLQEMLTIKSDDIDGRDAAYQSIVKGEEVSGSTIPESFKVLVKELHSLGLDVEVLDHGDKAVDIFEGMMPKR.

The protein belongs to the RNA polymerase beta chain family. In terms of assembly, the RNAP catalytic core consists of 2 alpha, 1 beta, 1 beta' and 1 omega subunit. When a sigma factor is associated with the core the holoenzyme is formed, which can initiate transcription.

The catalysed reaction is RNA(n) + a ribonucleoside 5'-triphosphate = RNA(n+1) + diphosphate. Its function is as follows. DNA-dependent RNA polymerase catalyzes the transcription of DNA into RNA using the four ribonucleoside triphosphates as substrates. The polypeptide is DNA-directed RNA polymerase subunit beta (Deinococcus radiodurans (strain ATCC 13939 / DSM 20539 / JCM 16871 / CCUG 27074 / LMG 4051 / NBRC 15346 / NCIMB 9279 / VKM B-1422 / R1)).